The chain runs to 318 residues: Methenyltetrahydromethanopterin cyclohydrolase (318 aa).

It belongs to the MCH family.

The protein localises to the cytoplasm. It carries out the reaction 5,10-methenyl-5,6,7,8-tetrahydromethanopterin + H2O = N(5)-formyl-5,6,7,8-tetrahydromethanopterin + H(+). Its pathway is one-carbon metabolism; methanogenesis from CO(2); 5,10-methenyl-5,6,7,8-tetrahydromethanopterin from CO(2): step 3/3. Functionally, catalyzes the reversible interconversion of 5-formyl-H(4)MPT to methenyl-H(4)MPT(+). The sequence is that of Methenyltetrahydromethanopterin cyclohydrolase from Methanocella arvoryzae (strain DSM 22066 / NBRC 105507 / MRE50).